The following is a 342-amino-acid chain: tRNA N6-adenosine threonylcarbamoyltransferase (342 aa).

Histidine 119 and histidine 123 together coordinate Fe cation. Substrate contacts are provided by residues 142-146 (VVSGG), aspartate 175, glycine 188, and asparagine 282. Aspartate 310 serves as a coordination point for Fe cation.

It belongs to the KAE1 / TsaD family. Fe(2+) serves as cofactor.

It is found in the cytoplasm. It carries out the reaction L-threonylcarbamoyladenylate + adenosine(37) in tRNA = N(6)-L-threonylcarbamoyladenosine(37) in tRNA + AMP + H(+). In terms of biological role, required for the formation of a threonylcarbamoyl group on adenosine at position 37 (t(6)A37) in tRNAs that read codons beginning with adenine. Is involved in the transfer of the threonylcarbamoyl moiety of threonylcarbamoyl-AMP (TC-AMP) to the N6 group of A37, together with TsaE and TsaB. TsaD likely plays a direct catalytic role in this reaction. In Moorella thermoacetica (strain ATCC 39073 / JCM 9320), this protein is tRNA N6-adenosine threonylcarbamoyltransferase.